A 123-amino-acid polypeptide reads, in one-letter code: Transmembrane protein 254 (123 aa).

3 helical membrane passes run 15–35 (LFWF…VFWP), 63–83 (NGYW…LVLC), and 95–115 (LLWF…LIAY).

It is found in the membrane. This is Transmembrane protein 254 from Mus musculus (Mouse).